Reading from the N-terminus, the 457-residue chain is NADP-specific glutamate dehydrogenase (457 aa).

Lys111 is a catalytic residue.

This sequence belongs to the Glu/Leu/Phe/Val dehydrogenases family. Homohexamer.

The enzyme catalyses L-glutamate + NADP(+) + H2O = 2-oxoglutarate + NH4(+) + NADPH + H(+). This is NADP-specific glutamate dehydrogenase (gdhA) from Agaricus bisporus (White button mushroom).